Consider the following 89-residue polypeptide: HssA/B-like protein 21 (89 aa).

The protein belongs to the hssA/B family.

The polypeptide is HssA/B-like protein 21 (hssl21) (Dictyostelium discoideum (Social amoeba)).